The primary structure comprises 38 residues: Mu/omega-theraphotoxin-Mb1a (38 aa).

Disulfide bonds link C7/C21, C14/C26, and C20/C33. At T38 the chain carries Threonine amide.

Belongs to the neurotoxin 10 (Hwtx-1) family. 28 (Jztx-11) subfamily. Expressed by the venom gland.

The protein resides in the secreted. Functionally, paralytic toxin that inhibits insect voltage-gated sodium (Nav) and calcium (Cav) channels in P.americana (American cockroach) dorsal unpaired median (DUM) neurons, and inhibits the B.germanica (German cockroach) Nav channel (BgNaV1). Also shows a delay in fast inactivation when tested on BgNaV1. May act as a gating-modifier toxin on Nav and as a pore blocker on Cav. In vivo, reversibly paralyzes both L.cuprina (Australian sheep blowfly) and M.domestica (housefly), but does not affect larvae of H.armigera (cotton bollworms). The polypeptide is Mu/omega-theraphotoxin-Mb1a (Monocentropus balfouri (Socotra Island blue baboon tarantula)).